The primary structure comprises 607 residues: V-type proton ATPase catalytic subunit A (607 aa).

246–253 contributes to the ATP binding site; sequence GAFGCGKT.

Belongs to the ATPase alpha/beta chains family. V-ATPase is a heteromultimeric enzyme composed of a peripheral catalytic V1 complex (components A to H) attached to an integral membrane V0 proton pore complex (components: a, c, c', c'', d, e, f and VOA1).

It localises to the vacuole membrane. The enzyme catalyses ATP + H2O + 4 H(+)(in) = ADP + phosphate + 5 H(+)(out). Its function is as follows. Catalytic subunit of the V1 complex of vacuolar(H+)-ATPase (V-ATPase), a multisubunit enzyme composed of a peripheral complex (V1) that hydrolyzes ATP and a membrane integral complex (V0) that translocates protons. V-ATPase is responsible for acidifying and maintaining the pH of intracellular compartments. This is V-type proton ATPase catalytic subunit A (vma-1) from Neurospora crassa (strain ATCC 24698 / 74-OR23-1A / CBS 708.71 / DSM 1257 / FGSC 987).